The following is a 420-amino-acid chain: MRLDEYMDIERDERAERRRLAEEKSYGILDHLETFQDRFEETVQGDSLYGGVSPSIFVGRSNYPNVSTGILSPVGHDEDAASFETSAAWYDEGVSIDDVFQRRTSLLNSNRGTKVTNVADSWDGFLGTQREVAIADRPVTVEIGLDGKPSLDLDASADDVATPVGPRARARSADLAENPHVPKLVKKTLEDDDWNAEGAMTYLYRRGFDVYDINTILSAGALGQTEQRRLVPTRWSITAVDDTLGQYLRGQVKHAESVDGVEIYRNEFIGNAFWVILAPGRWEFELIELKAPGSVWNPDPEAGMYLAADREGYEGRTGYVNETAGAYHASRLGVLEHLQERGRQAKALVIRHVSDDYWGPVGVWQIRESIRHAFEGEMADAETFGDAVRDVTEYLPVSLADLRRKSTMAAGLQTDIFDFA.

The short motif at glutamine 413–alanine 420 is the PIP motif element.

Belongs to the Nre family. Interacts with the DNA polymerase sliding clamp (PCNA) via the PIP (PCNA-interacting peptide) motif.

Functionally, involved in DNA damage repair. Works together with the UvrABC proteins in repairing DNA damage resulting from exposure to the DNA damaging agent mitomycin C (MMC). The chain is DNA repair protein NreA from Haloferax volcanii (strain ATCC 29605 / DSM 3757 / JCM 8879 / NBRC 14742 / NCIMB 2012 / VKM B-1768 / DS2) (Halobacterium volcanii).